Here is a 239-residue protein sequence, read N- to C-terminus: Adapter protein MecA (239 aa).

Residues 118–128 (EQRTKEKEAQG) are compositionally biased toward basic and acidic residues. The tract at residues 118 to 137 (EQRTKEKEAQGSKRQKSSAR) is disordered.

The protein belongs to the MecA family. In terms of assembly, homodimer.

Functionally, enables the recognition and targeting of unfolded and aggregated proteins to the ClpC protease or to other proteins involved in proteolysis. The sequence is that of Adapter protein MecA from Staphylococcus aureus (strain Mu3 / ATCC 700698).